The following is a 467-amino-acid chain: ATP synthase subunit beta (467 aa).

ATP is bound at residue 156–163; sequence GGAGVGKT.

This sequence belongs to the ATPase alpha/beta chains family. F-type ATPases have 2 components, CF(1) - the catalytic core - and CF(0) - the membrane proton channel. CF(1) has five subunits: alpha(3), beta(3), gamma(1), delta(1), epsilon(1). CF(0) has three main subunits: a(1), b(2) and c(9-12). The alpha and beta chains form an alternating ring which encloses part of the gamma chain. CF(1) is attached to CF(0) by a central stalk formed by the gamma and epsilon chains, while a peripheral stalk is formed by the delta and b chains.

Its subcellular location is the cell inner membrane. It catalyses the reaction ATP + H2O + 4 H(+)(in) = ADP + phosphate + 5 H(+)(out). In terms of biological role, produces ATP from ADP in the presence of a proton gradient across the membrane. The catalytic sites are hosted primarily by the beta subunits. The polypeptide is ATP synthase subunit beta (Ralstonia nicotianae (strain ATCC BAA-1114 / GMI1000) (Ralstonia solanacearum)).